The following is a 399-amino-acid chain: (R)-2-hydroxy-4-methylpentanoate CoA-transferase (399 aa).

Asp171 acts as the Nucleophile in catalysis.

The protein belongs to the CoA-transferase III family. As to quaternary structure, homodimer.

The enzyme catalyses 4-methylpentanoyl-CoA + (2R)-hydroxy-4-methylpentanoate = (R)-2-hydroxy-4-methylpentanoyl-CoA + 4-methylpentanoate. It participates in amino-acid degradation; L-leucine degradation. In terms of biological role, involved in the reductive branch of L-leucine fermentation. Catalyzes the transfer of the CoA moiety from 4-methylpentanoyl-CoA (isocaproyl-CoA) to (R)-2-hydroxy-4-methylpentanoate ((R)-2-hydroxyisocaproate), leading to the formation of (R)-2-hydroxy-4-methylpentanoyl-CoA. Other CoA thioesters, such as acetyl-CoA or butyryl-CoA, are not accepted as substrates. This Clostridioides difficile (Peptoclostridium difficile) protein is (R)-2-hydroxy-4-methylpentanoate CoA-transferase.